Reading from the N-terminus, the 266-residue chain is Transcription factor atoh8 (266 aa).

A disordered region spans residues 140–164 (AASQAPAGGSERAESPRKRAGEPSG). Over residues 150 to 160 (ERAESPRKRAG) the composition is skewed to basic and acidic residues. Positions 175–188 (TRRLLANARERTRV) are basic motif; degenerate. Residues 175 to 227 (TRRLLANARERTRVHTISAAFEALRKQVPCYSYGQKLSKLAILRIACNYILSL) form the bHLH domain. The helix-loop-helix motif stretch occupies residues 189-227 (HTISAAFEALRKQVPCYSYGQKLSKLAILRIACNYILSL).

It is found in the nucleus. It localises to the nucleus speckle. The protein localises to the cytoplasm. Transcription factor that binds a palindromic (canonical) core consensus DNA sequence 5'-CANNTG- 3' known as an E-box element, possibly as a heterodimer with other bHLH proteins. During development, is required for heart looping and swim bladder formation by acting in concert with GATA4 and ZFPM1. During the development of both the retina and skeletal muscles is required for neural retinal cell through modulating PAX6 and NEUROG3 expression and myogenic differentiation. This chain is Transcription factor atoh8, found in Danio rerio (Zebrafish).